The following is a 138-amino-acid chain: Large ribosomal subunit protein bL19 (138 aa).

It belongs to the bacterial ribosomal protein bL19 family.

Its function is as follows. This protein is located at the 30S-50S ribosomal subunit interface and may play a role in the structure and function of the aminoacyl-tRNA binding site. This Rickettsia massiliae (strain Mtu5) protein is Large ribosomal subunit protein bL19.